An 86-amino-acid chain; its full sequence is MVSEQFNAAAEKVKSLTKRPSDDEFLQLYALFKQASVGDNDTAKPGLLDLKGKAKWEAWNKQKGKSSEAAQQEYITFVEGLVAKYA.

The ACB domain maps to 2 to 86; the sequence is VSEQFNAAAE…FVEGLVAKYA (85 aa). An acyl-CoA is bound by residues lysine 14, 29–33, lysine 51, lysine 55, and tyrosine 74; that span reads YALFK.

This sequence belongs to the ACBP family. In terms of tissue distribution, expressed in larval and pupal brains. In adults, expressed in cardia, part of the Malpighian tubules, fat body, and gametes of both sexes.

In terms of biological role, binds medium- and long-chain acyl-CoA esters with very high affinity and may function as an intracellular carrier of acyl-CoA esters. May be involved in energy metabolism in a manner that depends on the substrate used for energy production. Dbi and its metabolites are involved in the regulation of multiple biological processes. This Drosophila melanogaster (Fruit fly) protein is Acyl-CoA-binding protein homolog.